A 366-amino-acid polypeptide reads, in one-letter code: MERITVNLAERSYPISIGAGLFEDPAYLSQILSNKNANQKVVVISNVTVAPLYAEKILSQLEQLGCDASLLELPDGEQYKSLDTFNQVMNFLLEGSYARDVVIIALGGGVIGDLVGFASACYQRGVDFIQIPTTLLSQVDSSVGGKTAVNHPLGKNMIGAFYQPKAVIIDTNCLSTLPEREFAAGIAEVIKYGIIYDGAFFDWLEENLDRLYALDEEALTYAIARCCEIKAEVVAQDEKESGIRALLNLGHTFGHAIEAELGYGNWLHGEAVSSGTVMAAKTSHLRGLISQEQLDRIINIMRSAKLPVHTPDTMSFDDFMTHMMRDKKVLSGQLRLVLPTGIGSAEVIADTPQDIIKQAIDFGRDI.

Residues 75–80 (DGEQYK), 109–113 (GVIGD), 133–134 (TT), Lys146, Lys155, and 173–176 (CLST) contribute to the NAD(+) site. Glu188, His251, and His268 together coordinate Zn(2+).

The protein belongs to the sugar phosphate cyclases superfamily. Dehydroquinate synthase family. Co(2+) serves as cofactor. The cofactor is Zn(2+). NAD(+) is required as a cofactor.

The protein localises to the cytoplasm. The catalysed reaction is 7-phospho-2-dehydro-3-deoxy-D-arabino-heptonate = 3-dehydroquinate + phosphate. Its pathway is metabolic intermediate biosynthesis; chorismate biosynthesis; chorismate from D-erythrose 4-phosphate and phosphoenolpyruvate: step 2/7. In terms of biological role, catalyzes the conversion of 3-deoxy-D-arabino-heptulosonate 7-phosphate (DAHP) to dehydroquinate (DHQ). This chain is 3-dehydroquinate synthase, found in Vibrio campbellii (strain ATCC BAA-1116).